The chain runs to 93 residues: Large ribosomal subunit protein uL23cz/uL23cy (93 aa).

The protein belongs to the universal ribosomal protein uL23 family. As to quaternary structure, part of the 50S ribosomal subunit.

Its subcellular location is the plastid. The protein resides in the chloroplast. Binds to 23S rRNA. This chain is Large ribosomal subunit protein uL23cz/uL23cy (rpl23-A), found in Phaseolus angularis (Azuki bean).